The chain runs to 163 residues: SsrA-binding protein (163 aa).

Belongs to the SmpB family.

It is found in the cytoplasm. In terms of biological role, required for rescue of stalled ribosomes mediated by trans-translation. Binds to transfer-messenger RNA (tmRNA), required for stable association of tmRNA with ribosomes. tmRNA and SmpB together mimic tRNA shape, replacing the anticodon stem-loop with SmpB. tmRNA is encoded by the ssrA gene; the 2 termini fold to resemble tRNA(Ala) and it encodes a 'tag peptide', a short internal open reading frame. During trans-translation Ala-aminoacylated tmRNA acts like a tRNA, entering the A-site of stalled ribosomes, displacing the stalled mRNA. The ribosome then switches to translate the ORF on the tmRNA; the nascent peptide is terminated with the 'tag peptide' encoded by the tmRNA and targeted for degradation. The ribosome is freed to recommence translation, which seems to be the essential function of trans-translation. This Shewanella putrefaciens (strain CN-32 / ATCC BAA-453) protein is SsrA-binding protein.